Here is a 190-residue protein sequence, read N- to C-terminus: dCTP deaminase (190 aa).

DCTP-binding positions include 111-116 (KSTYAR), 135-137 (TLE), glutamine 156, tyrosine 172, and glutamine 182. Glutamate 137 functions as the Proton donor/acceptor in the catalytic mechanism.

Belongs to the dCTP deaminase family. In terms of assembly, homotrimer.

It catalyses the reaction dCTP + H2O + H(+) = dUTP + NH4(+). It participates in pyrimidine metabolism; dUMP biosynthesis; dUMP from dCTP (dUTP route): step 1/2. Catalyzes the deamination of dCTP to dUTP. This Stenotrophomonas maltophilia (strain R551-3) protein is dCTP deaminase.